The following is a 182-amino-acid chain: D-lyxose ketol-isomerase (182 aa).

Histidine 74, histidine 76, glutamate 87, and histidine 142 together coordinate Mn(2+).

This sequence belongs to the D-lyxose ketol-isomerase family. In terms of assembly, homodimer. Mn(2+) serves as cofactor.

It carries out the reaction D-lyxose = D-xylulose. Sugar isomerase that catalyzes the reversible isomerization of D-lyxose to D-xylulose. Shows weak activity with D-mannose and L-ribose. In Cohnella laeviribosi, this protein is D-lyxose ketol-isomerase.